Reading from the N-terminus, the 803-residue chain is Sensor histidine kinase CheAY (803 aa).

Position 47 is a phosphohistidine (H47). Disordered stretches follow at residues 134 to 185 (LESA…DEPD) and 209 to 255 (EADK…ENKA). Composition is skewed to basic and acidic residues over residues 136–166 (SAKE…ENKA), 209–226 (EADK…KPKQ), and 233–254 (ETPK…EENK). A Histidine kinase domain is found at 270–517 (RLDHLMNLIG…TQKLKIPLTL (248 aa)). A Phosphohistidine; by autocatalysis modification is found at H273. In terms of domain architecture, CheW-like spans 519-653 (IIQALLVGVQ…VGAMMDMAKS (135 aa)). One can recognise a Response regulatory domain in the interval 678 to 796 (IVLAIDDSST…YLTTVVKRSI (119 aa)). 4-aspartylphosphate is present on D729.

Post-translationally, autophosphorylated.

It carries out the reaction ATP + protein L-histidine = ADP + protein N-phospho-L-histidine.. Member of the two-component regulatory system CheAY/CheY that regulates chemotaxis and colonization of the gastric mucosa. Functions as a sensor protein kinase which is autophosphorylated at a histidine residue and transfers its phosphate group to the conserved aspartic acid residue in the regulatory domain of CheY. In turn, phosphorylated CheY (CheY-P) interacts with the flagellar motor protein FliM to cause clockwise flagellar rotation and bacterial reversals, as opposed to straight swimming when CheY is not phosphorylated. The polypeptide is Sensor histidine kinase CheAY (cheAY) (Helicobacter pylori (strain ATCC 700392 / 26695) (Campylobacter pylori)).